Reading from the N-terminus, the 203-residue chain is GTP cyclohydrolase-2 (203 aa).

49–53 (RIHSE) is a binding site for GTP. Cys-54, Cys-65, and Cys-67 together coordinate Zn(2+). Residues Gln-70, 92–94 (EGR), and Thr-114 contribute to the GTP site. Asp-126 functions as the Proton acceptor in the catalytic mechanism. Arg-128 (nucleophile) is an active-site residue. 2 residues coordinate GTP: Thr-149 and Lys-154.

Belongs to the GTP cyclohydrolase II family. It depends on Zn(2+) as a cofactor.

The enzyme catalyses GTP + 4 H2O = 2,5-diamino-6-hydroxy-4-(5-phosphoribosylamino)-pyrimidine + formate + 2 phosphate + 3 H(+). It functions in the pathway cofactor biosynthesis; riboflavin biosynthesis; 5-amino-6-(D-ribitylamino)uracil from GTP: step 1/4. Functionally, catalyzes the conversion of GTP to 2,5-diamino-6-ribosylamino-4(3H)-pyrimidinone 5'-phosphate (DARP), formate and pyrophosphate. The polypeptide is GTP cyclohydrolase-2 (Shewanella sp. (strain W3-18-1)).